The primary structure comprises 277 residues: Sulfur carrier protein FdhD (277 aa).

Cys-121 serves as the catalytic Cysteine persulfide intermediate. 260-265 is a Mo-bis(molybdopterin guanine dinucleotide) binding site; sequence FCKPGR.

Belongs to the FdhD family.

It is found in the cytoplasm. Required for formate dehydrogenase (FDH) activity. Acts as a sulfur carrier protein that transfers sulfur from IscS to the molybdenum cofactor prior to its insertion into FDH. The protein is Sulfur carrier protein FdhD of Escherichia coli O81 (strain ED1a).